The chain runs to 185 residues: MTEETTVSKKRWYVLQAFSGFESRVALTLREYIKQQQMEDQFGEVLVPTEEVVENVAGKRRKSERKFFPGYVLVEMEMNDETWHLVKSVPRVMGFIGGTPDKPAPISKREADTILNRLEQNTDKPRHRNEYHPGEEVRVTEGPFADFNGTVEEVDYEKGRLKVSVSMFGRATPVELEFGQVEKIH.

The region spanning 133 to 161 is the KOW domain; that stretch reads PGEEVRVTEGPFADFNGTVEEVDYEKGRL.

The protein belongs to the NusG family.

In terms of biological role, participates in transcription elongation, termination and antitermination. The sequence is that of Transcription termination/antitermination protein NusG from Haemophilus influenzae (strain ATCC 51907 / DSM 11121 / KW20 / Rd).